We begin with the raw amino-acid sequence, 449 residues long: Phosphoglucosamine mutase (449 aa).

Residue Ser101 is the Phosphoserine intermediate of the active site. Residues Ser101, Asp243, Asp245, and Asp247 each contribute to the Mg(2+) site. At Ser101 the chain carries Phosphoserine.

The protein belongs to the phosphohexose mutase family. Mg(2+) is required as a cofactor. In terms of processing, activated by phosphorylation.

It carries out the reaction alpha-D-glucosamine 1-phosphate = D-glucosamine 6-phosphate. Functionally, catalyzes the conversion of glucosamine-6-phosphate to glucosamine-1-phosphate. This is Phosphoglucosamine mutase from Syntrophobacter fumaroxidans (strain DSM 10017 / MPOB).